The primary structure comprises 37 residues: Large ribosomal subunit protein bL36 (37 aa).

The protein belongs to the bacterial ribosomal protein bL36 family.

In Syntrophomonas wolfei subsp. wolfei (strain DSM 2245B / Goettingen), this protein is Large ribosomal subunit protein bL36.